We begin with the raw amino-acid sequence, 543 residues long: CTP synthase (543 aa).

The segment at 1-265 is amidoligase domain; that stretch reads MARYIFITGG…DDEVLAAFGI (265 aa). Ser-13 provides a ligand contact to CTP. UTP is bound at residue Ser-13. 14–19 is a binding site for ATP; sequence SLGKGL. Residue Tyr-54 coordinates L-glutamine. Asp-71 lines the ATP pocket. Mg(2+) is bound by residues Asp-71 and Glu-139. CTP-binding positions include 146–148, 186–191, and Lys-222; these read DIE and KTKPTQ. UTP-binding positions include 186–191 and Lys-222; that span reads KTKPTQ. 238-240 contacts ATP; that stretch reads RDV. In terms of domain architecture, Glutamine amidotransferase type-1 spans 291–542; it reads TIAIVGKYTG…IQAAVVQSRL (252 aa). Residue Gly-353 coordinates L-glutamine. Cys-380 functions as the Nucleophile; for glutamine hydrolysis in the catalytic mechanism. Residues 381–384, Glu-404, and Arg-470 each bind L-glutamine; that span reads FGMQ. Residues His-515 and Glu-517 contribute to the active site.

The protein belongs to the CTP synthase family. As to quaternary structure, homotetramer.

It catalyses the reaction UTP + L-glutamine + ATP + H2O = CTP + L-glutamate + ADP + phosphate + 2 H(+). The catalysed reaction is L-glutamine + H2O = L-glutamate + NH4(+). The enzyme catalyses UTP + NH4(+) + ATP = CTP + ADP + phosphate + 2 H(+). The protein operates within pyrimidine metabolism; CTP biosynthesis via de novo pathway; CTP from UDP: step 2/2. Its activity is regulated as follows. Allosterically activated by GTP, when glutamine is the substrate; GTP has no effect on the reaction when ammonia is the substrate. The allosteric effector GTP functions by stabilizing the protein conformation that binds the tetrahedral intermediate(s) formed during glutamine hydrolysis. Inhibited by the product CTP, via allosteric rather than competitive inhibition. Its function is as follows. Catalyzes the ATP-dependent amination of UTP to CTP with either L-glutamine or ammonia as the source of nitrogen. Regulates intracellular CTP levels through interactions with the four ribonucleotide triphosphates. The protein is CTP synthase of Bradyrhizobium sp. (strain BTAi1 / ATCC BAA-1182).